The following is a 329-amino-acid chain: Lipoyl synthase (329 aa).

7 residues coordinate [4Fe-4S] cluster: Cys72, Cys77, Cys83, Cys98, Cys102, Cys105, and Ser313. The Radical SAM core domain occupies 83-303; that stretch reads CWSHGTATIM…QIGLKKGFFE (221 aa).

This sequence belongs to the radical SAM superfamily. Lipoyl synthase family. The cofactor is [4Fe-4S] cluster.

The protein localises to the cytoplasm. The catalysed reaction is [[Fe-S] cluster scaffold protein carrying a second [4Fe-4S](2+) cluster] + N(6)-octanoyl-L-lysyl-[protein] + 2 oxidized [2Fe-2S]-[ferredoxin] + 2 S-adenosyl-L-methionine + 4 H(+) = [[Fe-S] cluster scaffold protein] + N(6)-[(R)-dihydrolipoyl]-L-lysyl-[protein] + 4 Fe(3+) + 2 hydrogen sulfide + 2 5'-deoxyadenosine + 2 L-methionine + 2 reduced [2Fe-2S]-[ferredoxin]. The protein operates within protein modification; protein lipoylation via endogenous pathway; protein N(6)-(lipoyl)lysine from octanoyl-[acyl-carrier-protein]: step 2/2. Its function is as follows. Catalyzes the radical-mediated insertion of two sulfur atoms into the C-6 and C-8 positions of the octanoyl moiety bound to the lipoyl domains of lipoate-dependent enzymes, thereby converting the octanoylated domains into lipoylated derivatives. In Legionella pneumophila (strain Paris), this protein is Lipoyl synthase.